Consider the following 67-residue polypeptide: Large ribosomal subunit protein bL35 (67 aa).

The protein belongs to the bacterial ribosomal protein bL35 family.

This Bartonella quintana (strain Toulouse) (Rochalimaea quintana) protein is Large ribosomal subunit protein bL35.